Here is a 505-residue protein sequence, read N- to C-terminus: Lysine--tRNA ligase (505 aa).

Mg(2+)-binding residues include glutamate 415 and glutamate 422.

The protein belongs to the class-II aminoacyl-tRNA synthetase family. In terms of assembly, homodimer. Mg(2+) is required as a cofactor.

The protein resides in the cytoplasm. The catalysed reaction is tRNA(Lys) + L-lysine + ATP = L-lysyl-tRNA(Lys) + AMP + diphosphate. The chain is Lysine--tRNA ligase from Xanthomonas campestris pv. campestris (strain 8004).